A 153-amino-acid polypeptide reads, in one-letter code: Small ribosomal subunit protein bS16 (153 aa).

The tract at residues 130–153 is disordered; it reads EAEAAAAAEEAPAEEAAEEAPAEA. The span at 140–153 shows a compositional bias: acidic residues; the sequence is APAEEAAEEAPAEA.

It belongs to the bacterial ribosomal protein bS16 family.

In Bifidobacterium longum (strain NCC 2705), this protein is Small ribosomal subunit protein bS16.